Reading from the N-terminus, the 482-residue chain is Mannan endo-1,4-beta-mannosidase (482 aa).

The first 21 residues, 1–21 (MARTLRYLLCGILALAAGSNA), serve as a signal peptide directing secretion. One can recognise a CBM6 domain in the interval 42–160 (TTYEAEDAIL…WYLVDSITLT (119 aa)). N171 and N300 each carry an N-linked (GlcNAc...) asparagine glycan. One can recognise a GH26 domain in the interval 181 to 474 (ASARALYDYL…YTSDYVLTLD (294 aa)). E332 serves as the catalytic Proton donor. The Nucleophile role is filled by E422.

It belongs to the glycosyl hydrolase 26 family.

It localises to the secreted. Its activity is regulated as follows. The activity is completely impaired by Ag(+), partially inhibited by Zn(2+), and enhanced by Co(2+), Ni(2+) and Cu(2+) by 22.6, 14.5 and 20.8 %, respectively. Ca(2+), Na(+), Mg(2+), Mn(2+), urea and EDTA do not significantly affect the mannanase activity. Functionally, mannan endo-1,4-beta-mannosidase that exhibits high activity against konjac glucomannan and carob galactomannan, as well as a lower activity toward beta-mannan. Shows no activity against barley beta-glucan, birchwood xylan, and low viscosity carboxymethyl cellulose (CMC). Has the ability to hydrolyze manno-oligosaccharides such as M4 which is degraded slightly to M3 and M1, M5 which is mainly degraded to M4 and M1, and M6 which is mostly hydrolyzed to M4 and M2. Shows no activity toward M2 and M3 manno-oligosaccharides. This is Mannan endo-1,4-beta-mannosidase from Thermothelomyces thermophilus (strain ATCC 42464 / BCRC 31852 / DSM 1799) (Sporotrichum thermophile).